A 483-amino-acid chain; its full sequence is Regulatory protein ViaA (483 aa).

This sequence belongs to the ViaA family. Homodimer. Interacts with RavA.

Its subcellular location is the cytoplasm. Its function is as follows. Component of the RavA-ViaA chaperone complex, which may act on the membrane to optimize the function of some of the respiratory chains. ViaA stimulates the ATPase activity of RavA. This chain is Regulatory protein ViaA, found in Salmonella paratyphi A (strain ATCC 9150 / SARB42).